Reading from the N-terminus, the 242-residue chain is Protein HTATIP2 (242 aa).

At Ala2 the chain carries N-acetylalanine. Positions 2–25 are required for interaction with elongation factor EEF1A1; that stretch reads AETEALSKLREDFRMQNKSVFILG. The NADPH site is built by Ser27, Gly28, Glu29, Thr30, Arg52, Arg53, Leu92, Gly93, Tyr143, Lys147, and Arg178. Catalysis depends on Tyr143, which acts as the Proton acceptor. Lys147 is a catalytic residue.

As to quaternary structure, monomer. Forms homodimers during oxidative stress. Interacts (via N-terminus) with elongation factor EEF1A1 (via middle-region); the interaction is direct and competes with EEF1A1 binding to guanyl-nucleotide exchange factor EEF1B2, thereby inhibiting GDP for GTP exchange and reactivation of EEF1A1. Interacts with nuclear transport receptors XPO4, IPO5/RANBP5, IPO7, IPO9 and KPNB1 as well as GCN1L1/GCN1 and LRPPRC probably through their HEAT repeats. Binds NCOA5/CIA.

It localises to the cytoplasm. Functionally, represses translation by preventing reactivation of elongation factor eEF1A. May also inhibit nuclear import by competing with nuclear import substrates for binding to a subset of nuclear transport receptors. Has additionally been proposed to act as a redox sensor involved in cellular oxidative stress surveillance. This chain is Protein HTATIP2 (HTATIP2), found in Pan paniscus (Pygmy chimpanzee).